Here is a 370-residue protein sequence, read N- to C-terminus: Prolactin-releasing peptide receptor (370 aa).

The Extracellular portion of the chain corresponds to methionine 1 to leucine 62. N-linked (GlcNAc...) asparagine glycans are attached at residues asparagine 27 and asparagine 36. The helical transmembrane segment at isoleucine 63–leucine 83 threads the bilayer. The Cytoplasmic segment spans residues valine 84–asparagine 101. Residues leucine 102 to phenylalanine 122 form a helical membrane-spanning segment. The Extracellular portion of the chain corresponds to glutamate 123–glycine 126. A helical membrane pass occupies residues tryptophan 127–valine 147. Cysteine 134 and cysteine 211 are oxidised to a cystine. At serine 148 to phenylalanine 175 the chain is on the cytoplasmic side. A helical transmembrane segment spans residues serine 176–leucine 196. Topologically, residues histidine 197 to tyrosine 225 are extracellular. The chain crosses the membrane as a helical span at residues alanine 226 to valine 246. The Cytoplasmic segment spans residues arginine 247–threonine 276. Residues phenylalanine 277–phenylalanine 297 form a helical membrane-spanning segment. The Extracellular segment spans residues asparagine 298–glutamine 317. Residues leucine 318 to leucine 338 form a helical membrane-spanning segment. Topologically, residues histidine 339–valine 369 are cytoplasmic. The required for interaction with GRIP1, GRIP2 and PICK1 stretch occupies residues threonine 365–isoleucine 370.

Belongs to the G-protein coupled receptor 1 family. As to quaternary structure, interacts through its C-terminal region with the PDZ domain-containing proteins GRIP1, GRIP2 and PICK1. Interacts with PDZ domains 4 and 5 of GRIP1 and with the PDZ domain of PICK1.

Its subcellular location is the cell membrane. Its function is as follows. Receptor for prolactin-releasing peptide (PrRP). Implicated in lactation, regulation of food intake and pain-signal processing. The sequence is that of Prolactin-releasing peptide receptor (PRLHR) from Bos taurus (Bovine).